The primary structure comprises 255 residues: EEF1A lysine methyltransferase 4 (255 aa).

S-adenosyl-L-methionine contacts are provided by W26 and Y30. Position 39 is a phosphotyrosine (Y39). S-adenosyl-L-methionine contacts are provided by residues W41, G66, 88-89, 113-114, and K130; these read DY and DV. The Required for methyltransferase activity motif lies at 129 to 134; it reads EKGTLD.

Belongs to the methyltransferase superfamily.

It catalyses the reaction L-lysyl-[protein] + S-adenosyl-L-methionine = N(6)-methyl-L-lysyl-[protein] + S-adenosyl-L-homocysteine + H(+). It carries out the reaction N(6)-methyl-L-lysyl-[protein] + S-adenosyl-L-methionine = N(6),N(6)-dimethyl-L-lysyl-[protein] + S-adenosyl-L-homocysteine + H(+). The enzyme catalyses N(6),N(6)-dimethyl-L-lysyl-[protein] + S-adenosyl-L-methionine = N(6),N(6),N(6)-trimethyl-L-lysyl-[protein] + S-adenosyl-L-homocysteine + H(+). Functionally, protein-lysine methyltransferase that efficiently catalyzes three successive methylations on 'Lys-36' in eukaryotic translation elongation factor 1 alpha (EEF1A1 or EEF1A2). The protein is EEF1A lysine methyltransferase 4 of Mus musculus (Mouse).